The primary structure comprises 375 residues: Carbamoyl phosphate synthase small chain (375 aa).

A CPSase region spans residues 1–185 (MTQPAILVLE…LNANAFVQAE (185 aa)). Serine 47, glycine 237, and glycine 239 together coordinate L-glutamine. Residues 189 to 375 (KVVAYDYGVK…FVASMAEAKS (187 aa)) form the Glutamine amidotransferase type-1 domain. The Nucleophile role is filled by cysteine 265. Positions 266, 269, 307, 309, and 310 each coordinate L-glutamine. Active-site residues include histidine 349 and glutamate 351.

Belongs to the CarA family. In terms of assembly, composed of two chains; the small (or glutamine) chain promotes the hydrolysis of glutamine to ammonia, which is used by the large (or ammonia) chain to synthesize carbamoyl phosphate. Tetramer of heterodimers (alpha,beta)4.

The enzyme catalyses hydrogencarbonate + L-glutamine + 2 ATP + H2O = carbamoyl phosphate + L-glutamate + 2 ADP + phosphate + 2 H(+). It carries out the reaction L-glutamine + H2O = L-glutamate + NH4(+). It participates in amino-acid biosynthesis; L-arginine biosynthesis; carbamoyl phosphate from bicarbonate: step 1/1. Its pathway is pyrimidine metabolism; UMP biosynthesis via de novo pathway; (S)-dihydroorotate from bicarbonate: step 1/3. In terms of biological role, small subunit of the glutamine-dependent carbamoyl phosphate synthetase (CPSase). CPSase catalyzes the formation of carbamoyl phosphate from the ammonia moiety of glutamine, carbonate, and phosphate donated by ATP, constituting the first step of 2 biosynthetic pathways, one leading to arginine and/or urea and the other to pyrimidine nucleotides. The small subunit (glutamine amidotransferase) binds and cleaves glutamine to supply the large subunit with the substrate ammonia. In Xanthomonas campestris pv. campestris (strain ATCC 33913 / DSM 3586 / NCPPB 528 / LMG 568 / P 25), this protein is Carbamoyl phosphate synthase small chain.